The following is a 218-amino-acid chain: Small ribosomal subunit protein uS3c (218 aa).

Residues V47–A118 enclose the KH type-2 domain.

It belongs to the universal ribosomal protein uS3 family. In terms of assembly, part of the 30S ribosomal subunit.

The protein resides in the plastid. It is found in the chloroplast. This chain is Small ribosomal subunit protein uS3c (rps3), found in Illicium oligandrum (Star anise).